We begin with the raw amino-acid sequence, 426 residues long: Squamosa promoter-binding-like protein 10 (426 aa).

The segment at 178–255 (PPRCQAEGCK…AEHNRRRRKP (78 aa)) adopts an SBP-type zinc-finger fold. Positions 181, 186, 203, 206, 222, 225, 229, and 241 each coordinate Zn(2+). Positions 238–254 (KRSCRKRLAEHNRRRRK) match the Bipartite nuclear localization signal motif. Low complexity-rich tracts occupy residues 268 to 287 (DAAA…AATS) and 401 to 417 (SDQN…NNNN). 2 disordered regions span residues 268–290 (DAAA…SYTG) and 392–426 (PSTA…VDFM).

As to expression, expressed in stems, leaf sheaths, and young panicles.

Its subcellular location is the nucleus. Its function is as follows. Trans-acting factor that binds specifically to the consensus nucleotide sequence 5'-TNCGTACAA-3'. This Oryza sativa subsp. indica (Rice) protein is Squamosa promoter-binding-like protein 10 (SPL10).